A 629-amino-acid polypeptide reads, in one-letter code: (-)-alpha-pinene synthase, chloroplastic (629 aa).

A chloroplast-targeting transit peptide spans 1 to 48 (MSPVSVISLPSDLCLPTSFIDRSGRELIPLHITIPNVAMRRQGKLMTR). The Mg(2+) site is built by Asp380, Asp384, and Asp532. A DDXXD motif motif is present at residues 380–384 (DDMYD). Ser540 contacts K(+).

This sequence belongs to the terpene synthase family. Tpsd subfamily. Requires Mg(2+) as cofactor. Mn(2+) is required as a cofactor. The cofactor is K(+).

Its subcellular location is the plastid. It localises to the chloroplast. The catalysed reaction is (2E)-geranyl diphosphate = (1S,5S)-alpha-pinene + diphosphate. It functions in the pathway terpene metabolism; oleoresin biosynthesis. Its function is as follows. Involved in defensive oleoresin formation in conifers in response to insect attack or other injury. Involved in monoterpene (C10) olefins biosynthesis. Produces mainly (-)-alpha-pinene (79%) and lesser amounts of (-)-beta-pinene (4.2%), nearly racemic mixtures of camphene (2.8% (+)/2.2% (-)) and limonene (2.4% (+)/3.7% (-)), as well as small amounts of (+)-alpha-pinene (3.3%) and (+)-beta-pinene (2.4%). This chain is (-)-alpha-pinene synthase, chloroplastic (PT1), found in Pinus taeda (Loblolly pine).